The sequence spans 88 residues: EMBRYO SURROUNDING FACTOR 1-like protein 7 (88 aa).

A signal peptide spans 1–22 (MKSSHIALICIVMFSLFALHES). 4 disulfide bridges follow: C41-C57, C46-C85, C55-C81, and C58-C68.

It belongs to the MEG family. In terms of tissue distribution, expressed in leaves and flowers.

This chain is EMBRYO SURROUNDING FACTOR 1-like protein 7 (ESFL7), found in Arabidopsis thaliana (Mouse-ear cress).